Here is a 349-residue protein sequence, read N- to C-terminus: Histidinol-phosphate aminotransferase (349 aa).

The interval 1–22 (MVSIRPSVRHTPAYVPGEQPQT) is disordered. Lys-207 carries the N6-(pyridoxal phosphate)lysine modification.

Belongs to the class-II pyridoxal-phosphate-dependent aminotransferase family. Histidinol-phosphate aminotransferase subfamily. In terms of assembly, homodimer. The cofactor is pyridoxal 5'-phosphate.

It carries out the reaction L-histidinol phosphate + 2-oxoglutarate = 3-(imidazol-4-yl)-2-oxopropyl phosphate + L-glutamate. It functions in the pathway amino-acid biosynthesis; L-histidine biosynthesis; L-histidine from 5-phospho-alpha-D-ribose 1-diphosphate: step 7/9. The chain is Histidinol-phosphate aminotransferase (hisC) from Synechocystis sp. (strain ATCC 27184 / PCC 6803 / Kazusa).